A 288-amino-acid polypeptide reads, in one-letter code: Pyridoxal kinase PdxY (288 aa).

Residues S12 and 47-48 (TQ) each bind substrate. Residues D114, E151, K184, and 211-214 (RPLL) each bind ATP. Position 225 (D225) interacts with substrate.

This sequence belongs to the pyridoxine kinase family. PdxY subfamily. As to quaternary structure, homodimer. Mg(2+) serves as cofactor.

The catalysed reaction is pyridoxal + ATP = pyridoxal 5'-phosphate + ADP + H(+). The protein operates within cofactor metabolism; pyridoxal 5'-phosphate salvage; pyridoxal 5'-phosphate from pyridoxal: step 1/1. Pyridoxal kinase involved in the salvage pathway of pyridoxal 5'-phosphate (PLP). Catalyzes the phosphorylation of pyridoxal to PLP. This Pseudomonas aeruginosa (strain UCBPP-PA14) protein is Pyridoxal kinase PdxY.